The sequence spans 278 residues: Rhomboid protease GlpG (278 aa).

Transmembrane regions (helical) follow at residues 95-115 (GPLT…MQIL), 143-163 (AFLH…WYLG), 170-190 (LGSG…GWAQ), 192-212 (LFSG…MGYC), 224-241 (LMLP…LVAG), and 245-267 (ILGM…LMAF). Ser202 (nucleophile) is an active-site residue. His255 is a catalytic residue.

This sequence belongs to the peptidase S54 family.

It is found in the cell inner membrane. The catalysed reaction is Cleaves type-1 transmembrane domains using a catalytic dyad composed of serine and histidine that are contributed by different transmembrane domains.. In terms of biological role, rhomboid-type serine protease that catalyzes intramembrane proteolysis. In Serratia proteamaculans (strain 568), this protein is Rhomboid protease GlpG.